Reading from the N-terminus, the 1889-residue chain is Protein TIC 214 (1889 aa).

6 consecutive transmembrane segments (helical) span residues 11-31, 67-87, 88-108, 127-147, 175-195, and 224-244; these read LISLYMTIINSVVMVGLYYGF, FIAGQLMMFISIYYVPLHLAL, GKPHTITVLALPYLLFHFFWN, LSIQCVFLNNLIIQLFNHFIL, VGWLIGHILLMKWVGLVLVWI, and IFSILLFITCVYYLGRIPSPI. Over residues 255-265 the composition is skewed to acidic residues; it reads PEEVGESEEER. 2 disordered regions span residues 255–303 and 1610–1633; these read PEEV…PSKE and SNQEKDVEEDYDKSDKKKRRKKKQ. Positions 279 to 293 are enriched in polar residues; the sequence is NQKQGTEENTSSSLF.

It belongs to the TIC214 family. In terms of assembly, part of the Tic complex.

It localises to the plastid. The protein resides in the chloroplast inner membrane. Functionally, involved in protein precursor import into chloroplasts. May be part of an intermediate translocation complex acting as a protein-conducting channel at the inner envelope. The protein is Protein TIC 214 of Gossypium barbadense (Sea Island cotton).